We begin with the raw amino-acid sequence, 540 residues long: 2-isopropylmalate synthase (540 aa).

Residues 8–273 enclose the Pyruvate carboxyltransferase domain; sequence VLIFDTTLRD…FFGRDQDSPT (266 aa). Mn(2+)-binding residues include D17, H208, H210, and N244. Residues 408–540 are regulatory domain; the sequence is QLQLVQVSCG…AVVLDARPTL (133 aa).

This sequence belongs to the alpha-IPM synthase/homocitrate synthase family. LeuA type 1 subfamily. Homodimer. The cofactor is Mn(2+).

The protein resides in the cytoplasm. It carries out the reaction 3-methyl-2-oxobutanoate + acetyl-CoA + H2O = (2S)-2-isopropylmalate + CoA + H(+). It participates in amino-acid biosynthesis; L-leucine biosynthesis; L-leucine from 3-methyl-2-oxobutanoate: step 1/4. Catalyzes the condensation of the acetyl group of acetyl-CoA with 3-methyl-2-oxobutanoate (2-ketoisovalerate) to form 3-carboxy-3-hydroxy-4-methylpentanoate (2-isopropylmalate). The chain is 2-isopropylmalate synthase from Parasynechococcus marenigrum (strain WH8102).